We begin with the raw amino-acid sequence, 820 residues long: MEVEKSKSRHEIREERADYEGSPVREHRDGRRKEKDHRSKDKEKDYDREKIRDKDHRRDKEKERDRKRSRDEDTEKEISRGRDKEREKDKSRDRVKEKDKEKERNRHKDRENERDNEKEKDKDRARVKERASKKSHEDDDETHKAAERYEHSDNRGLNEGGDNVDAASSGKEASALDLQNRILKMREERKKKAEDASDALSWVARSRKIEEKRNAEKQRAQQLSRIFEEQDNLNQGENEDGEDGEHLSGVKVLHGLEKVVEGGAVILTLKDQSVLTDGDVNNEIDMLENVEIGEQKRRNEAYEAAKKKKGIYDDKFNDDPGAEKKMLPQYDEAATDEGIFLDAKGRFTGEAEKKLEELRKRIQGQTTHTFEDLNSSAKVSSDYFSQEEMLKFKKPKKKKQLRKKDKLDLSMLEAEAVASGLGAEDLGSRKDGRRQAMKEEKERIEYEKRSNAYQEAIAKADEASRLLRREQVQPFKRDEDESMVLADDAEDLYKSLEKARRLALIKKEEAGSGPQAVAHLVASSTNQTTDDNTTTGDETQENTVVFTEMGDFVWGLQRENDVRKPESEDVFMEEDVAPKAPVEVKEEHPDGLTEVNDTDMDAAEDSSDTKEITPDENIHEVAVGKGLSGALKLLKDRGTLKEKVEWGGRNMDKKKSKLVGIVDDDGGKESKDKESKDRFKDIRIERTDEFGRTLTPKEAFRLLSHKFHGKGPGKMKEEKRMKQYQEELKLKQMKNSDTPSQSVQRMREAQAQLKTPYLVLSGHVKPGQTSDPQSGFATVEKDVPGSLTPMLGDRKVEHFLGIKRKSEPGNSDTPPKRPKP.

3 stretches are compositionally biased toward basic and acidic residues: residues 1 to 156 (MEVE…DNRG), 210 to 219 (EEKRNAEKQR), and 426 to 445 (LGSR…ERIE). Disordered regions lie at residues 1–177 (MEVE…SALD), 210–248 (EEKR…EHLS), 420–445 (GLGA…ERIE), 523–544 (SSTN…ENTV), 564–617 (KPES…PDEN), 657–678 (KLVG…SKDR), 729–748 (KLKQ…RMRE), and 762–820 (GHVK…RPKP). Residue serine 22 is modified to Phosphoserine. Coiled coils occupy residues 58–120 (RDKE…EKEK), 171–235 (KEAS…NLNQ), and 433–510 (RRQA…KEEA). A compositionally biased stretch (low complexity) spans 525–543 (TNQTTDDNTTTGDETQENT). Over residues 582 to 591 (VEVKEEHPDG) the composition is skewed to basic and acidic residues. A compositionally biased stretch (acidic residues) spans 596–606 (NDTDMDAAEDS). Composition is skewed to basic and acidic residues over residues 607-617 (SDTKEITPDEN) and 665-678 (DGGK…SKDR). Composition is skewed to polar residues over residues 733-744 (MKNSDTPSQSVQ) and 767-776 (GQTSDPQSGF). Positions 792–807 (GDRKVEHFLGIKRKSE) are enriched in basic and acidic residues.

The protein belongs to the SNU66/SART1 family. Expressed in lateral root cap, columella, meristem and quiescent center (QC). Expressed in young leaves.

The protein resides in the nucleus. Functionally, plays a role in root, shoot and flower development. Probably required for normal root and shoot meristem organization and maintenance and the proper expression of PIN and PLT genes. Involved in leaf vasculature patterning. The protein is SART-1 family protein DOT2 of Arabidopsis thaliana (Mouse-ear cress).